We begin with the raw amino-acid sequence, 414 residues long: Serine/arginine (SR)-type shuttling mRNA binding protein NPL3 (414 aa).

A compositionally biased stretch (basic and acidic residues) spans 1 to 11 (MSEAQETHVEQ). Residues 1–119 (MSEAQETHVE…GRPPMHHRQE (119 aa)) form a disordered region. A Phosphoserine modification is found at Ser-15. Positions 33–51 (DAPQEPQVPQESAPQESAP) are enriched in low complexity. Residues 52–68 (QEPPAPQEQNDVPPPSN) are compositionally biased toward pro residues. A compositionally biased stretch (basic and acidic residues) spans 75 to 92 (EESHSVQDYQEAHQHHQP). The residue at position 79 (Ser-79) is a Phosphoserine. Pro residues predominate over residues 93-105 (PEPQPYYPPPPPG). RRM domains lie at 125 to 195 (TRLF…YSKL) and 200 to 275 (YRIT…RDDN). A phosphoserine mark is found at Ser-182, Ser-212, and Ser-224. Positions 269–299 (TVERDDNPPPIRRSNRGGFRGRGGFRGGFRG) are disordered. The segment covering 286–299 (GFRGRGGFRGGFRG) has biased composition (gly residues). Arg-288, Arg-290, Arg-294, and Arg-298 each carry dimethylated arginine. Arg-302 is subject to Omega-N-methylarginine. Residues Arg-307 and Arg-314 each carry the dimethylated arginine; alternate modification. An omega-N-methylarginine; alternate mark is found at Arg-307 and Arg-314. Arg-321, Arg-329, Arg-337, and Arg-344 each carry omega-N-methylarginine. A disordered region spans residues 343 to 414 (SRGGYDSPRG…DAPRERSPTR (72 aa)). Residues 346–360 (GYDSPRGGYDSPRGG) show a composition bias toward low complexity. A Dimethylated arginine; alternate modification is found at Arg-351. Position 351 is an omega-N-methylarginine; alternate (Arg-351). Phosphoserine is present on Ser-356. A dimethylated arginine; alternate mark is found at Arg-358, Arg-363, Arg-377, and Arg-384. Omega-N-methylarginine; alternate is present on residues Arg-358, Arg-363, Arg-377, and Arg-384. Residues 379-389 (SYGGSRGGYDG) show a composition bias toward gly residues. Arg-391 bears the Omega-N-methylarginine mark. Basic and acidic residues predominate over residues 399–414 (DAYRTRDAPRERSPTR).

This sequence belongs to the RRM GAR family. As to quaternary structure, interacts with RRP6. Methylated by HMT1. The methylation is required for nuclear export.

It is found in the cytoplasm. The protein resides in the nucleus. It localises to the stress granule. Involved in mRNA processing and export. Required for efficient splicing of a large set of pre-mRNAs by efficient co-transcriptional recruitment of the splicing machinery. Remains associated with the mRNP during early steps of translation elongation. The sequence is that of Serine/arginine (SR)-type shuttling mRNA binding protein NPL3 from Saccharomyces cerevisiae (strain ATCC 204508 / S288c) (Baker's yeast).